A 154-amino-acid polypeptide reads, in one-letter code: 17.8 kDa class I heat shock protein (154 aa).

A sHSP domain is found at 40 to 154; that stretch reads ESSAFANTRI…PEVKSIEISG (115 aa).

The protein belongs to the small heat shock protein (HSP20) family. Forms oligomeric structures.

It is found in the cytoplasm. The sequence is that of 17.8 kDa class I heat shock protein from Solanum lycopersicum (Tomato).